We begin with the raw amino-acid sequence, 106 residues long: UPF0145 protein APJL_0492 (106 aa).

This sequence belongs to the UPF0145 family.

In Actinobacillus pleuropneumoniae serotype 3 (strain JL03), this protein is UPF0145 protein APJL_0492.